The following is a 227-amino-acid chain: Abasic site processing protein YoaM (227 aa).

Cys2 acts as the Nucleophile in catalysis. Cys2 carries the post-translational modification Thiazolidine linkage to a ring-opened DNA abasic site. Glu106 is an active-site residue.

This sequence belongs to the SOS response-associated peptidase family.

With respect to regulation, formation and reversal of DNA-protein cross-link depends on DNA context. Catalyzes formation of the thiazolidine linkage in presence of abasic sites in single-stranded DNA. Mediates the reversal of the thiazolidine cross-link in presence of double stranded DNA. In terms of biological role, sensor of abasic sites in single-stranded DNA (ssDNA) required to preserve genome integrity by promoting error-free repair of abasic sites. Recognizes and binds abasic sites in ssDNA at replication forks and chemically modifies the lesion by forming a covalent cross-link with DNA: forms a stable thiazolidine linkage between a ring-opened abasic site and the alpha-amino and sulfhydryl substituents of its N-terminal catalytic cysteine residue. The DNA-protein cross-link is then reversed: able to catalyze the reversal of the thiazolidine cross-link and cycle between a cross-link and a non-cross-linked state depending on DNA context: mediates self-reversal of the thiazolidine cross-link in double stranded DNA. May act as a protease: mediates autocatalytic processing of its N-terminal methionine in order to expose the catalytic cysteine. The polypeptide is Abasic site processing protein YoaM (yoaM) (Bacillus subtilis (strain 168)).